The primary structure comprises 412 residues: Tyrosine--tRNA ligase (412 aa).

The 'HIGH' region signature appears at 50-59; it reads PTGTDIHLGH. A 'KMSKS' region motif is present at residues 244–248; that stretch reads KMSKS. K247 provides a ligand contact to ATP. In terms of domain architecture, S4 RNA-binding spans 348–411; sequence VKFFYLLSSL…IGKKIIKRFE (64 aa).

This sequence belongs to the class-I aminoacyl-tRNA synthetase family. TyrS type 2 subfamily. Homodimer.

Its subcellular location is the cytoplasm. The catalysed reaction is tRNA(Tyr) + L-tyrosine + ATP = L-tyrosyl-tRNA(Tyr) + AMP + diphosphate + H(+). Catalyzes the attachment of tyrosine to tRNA(Tyr) in a two-step reaction: tyrosine is first activated by ATP to form Tyr-AMP and then transferred to the acceptor end of tRNA(Tyr). The chain is Tyrosine--tRNA ligase from Prochlorococcus marinus (strain MIT 9312).